We begin with the raw amino-acid sequence, 142 residues long: Putative pre-16S rRNA nuclease (142 aa).

The protein belongs to the YqgF nuclease family.

The protein resides in the cytoplasm. Functionally, could be a nuclease involved in processing of the 5'-end of pre-16S rRNA. This Ruminiclostridium cellulolyticum (strain ATCC 35319 / DSM 5812 / JCM 6584 / H10) (Clostridium cellulolyticum) protein is Putative pre-16S rRNA nuclease.